We begin with the raw amino-acid sequence, 276 residues long: A-factor receptor protein (276 aa).

The region spanning 8-68 (VQTWRSIVDA…AIMDEQTSTV (61 aa)) is the HTH tetR-type domain. The segment at residues 31–50 (AISEILRRAKVTKGALYFHF) is a DNA-binding region (H-T-H motif). Residues 207 to 220 (EKAEREEQEARIAA) show a composition bias toward basic and acidic residues. The segment at 207–276 (EKAEREEQEA…AGVAAGGVVA (70 aa)) is disordered. Residues 221 to 235 (EAKGAGSDAATDSGS) are compositionally biased toward low complexity. Residues 236–257 (RSGGSGLRGGGSGRGPRAGGAG) are compositionally biased toward gly residues.

In terms of assembly, homodimer or multimer. Binds to both DNA and A-factor as a homodimer.

Its subcellular location is the cytoplasm. In terms of biological role, represses adpA expression by binding to the promoter region in the absence of A-factor, causing repression of streptomycin production and of sporulation. This chain is A-factor receptor protein (arpA), found in Streptomyces griseus.